Here is a 425-residue protein sequence, read N- to C-terminus: Alpha-muurolene synthase (425 aa).

Asp97, Asp101, Asn240, Ser244, and Glu248 together coordinate Mg(2+). The short motif at 97–101 (DNISD) is the DDXXD motif element. The interval 348–382 (VAPPPPPPPPTPPPQSSDADTKKQKVKAQDGKGPV) is disordered. Residues 349–362 (APPPPPPPPTPPPQ) show a composition bias toward pro residues. Residues 366–377 (ADTKKQKVKAQD) are compositionally biased toward basic and acidic residues.

Belongs to the terpene synthase family. It depends on Mg(2+) as a cofactor.

The enzyme catalyses (2E,6E)-farnesyl diphosphate = alpha-muurolene + diphosphate. It catalyses the reaction (2E,6E)-farnesyl diphosphate = gamma-muurolene + diphosphate. The catalysed reaction is (2E,6E)-farnesyl diphosphate = (+)-(R)-germacrene A + diphosphate. Functionally, sesquiterpene synthase that catalyzes the formation of alpha-muurolene, and at lower level (+)-(R)-germacrene A and gamma-muurolene. This is Alpha-muurolene synthase (COP3) from Coprinopsis cinerea (strain Okayama-7 / 130 / ATCC MYA-4618 / FGSC 9003) (Inky cap fungus).